The chain runs to 43 residues: Protein PsbN (43 aa).

The helical transmembrane segment at Thr-5–Phe-27 threads the bilayer.

This sequence belongs to the PsbN family.

The protein resides in the plastid. It is found in the chloroplast thylakoid membrane. Its function is as follows. May play a role in photosystem I and II biogenesis. The polypeptide is Protein PsbN (Mesostigma viride (Green alga)).